A 396-amino-acid polypeptide reads, in one-letter code: Elongation factor Tu (396 aa).

The tr-type G domain maps to 10–206; that stretch reads KPHVNVGTIG…ALDTYIPLPE (197 aa). The segment at 19–26 is G1; it reads GHVDHGKT. Residue 19-26 participates in GTP binding; the sequence is GHVDHGKT. A Mg(2+)-binding site is contributed by Thr-26. The G2 stretch occupies residues 60–64; that stretch reads GITIN. Residues 81 to 84 are G3; sequence DCPG. GTP contacts are provided by residues 81–85 and 136–139; these read DCPGH and NKCD. A G4 region spans residues 136 to 139; that stretch reads NKCD. Positions 174-176 are G5; the sequence is SAK.

The protein belongs to the TRAFAC class translation factor GTPase superfamily. Classic translation factor GTPase family. EF-Tu/EF-1A subfamily. In terms of assembly, monomer.

It localises to the cytoplasm. The enzyme catalyses GTP + H2O = GDP + phosphate + H(+). Its function is as follows. GTP hydrolase that promotes the GTP-dependent binding of aminoacyl-tRNA to the A-site of ribosomes during protein biosynthesis. This Polaromonas sp. (strain JS666 / ATCC BAA-500) protein is Elongation factor Tu.